The sequence spans 502 residues: Glycerol kinase (502 aa).

Position 13 (T13) interacts with ADP. Residues T13, T14, and S15 each contribute to the ATP site. T13 lines the sn-glycerol 3-phosphate pocket. R17 lines the ADP pocket. The sn-glycerol 3-phosphate site is built by R83, E84, Y136, and D246. Residues R83, E84, Y136, D246, and Q247 each coordinate glycerol. ADP-binding residues include T268 and G311. T268, G311, Q315, and G412 together coordinate ATP. Residues G412 and N416 each contribute to the ADP site.

The protein belongs to the FGGY kinase family.

The catalysed reaction is glycerol + ATP = sn-glycerol 3-phosphate + ADP + H(+). It functions in the pathway polyol metabolism; glycerol degradation via glycerol kinase pathway; sn-glycerol 3-phosphate from glycerol: step 1/1. Its activity is regulated as follows. Inhibited by fructose 1,6-bisphosphate (FBP). Its function is as follows. Key enzyme in the regulation of glycerol uptake and metabolism. Catalyzes the phosphorylation of glycerol to yield sn-glycerol 3-phosphate. This Francisella tularensis subsp. tularensis (strain FSC 198) protein is Glycerol kinase.